The following is a 229-amino-acid chain: MAKKKAFIPFFDFTSIVFLPWLISLCCNKSLKTWITNWWNTRQCETFLNDIQEKSILEKFIQLEELFQLDEMIKEYPETDLQQFRLGIHKETIQFIKIHNEYRIHTILHFSTNLISFVILSGYSFWGKEKLFILNSWVQEFLYNLSDTIKAFSILLLTDLCIGFHSPHGWELMIGYIYKDFGFAHYEQILSGLVSTFPVILDTIFKYWIFRYLNRVSPSLVVIYHAIND.

3 consecutive transmembrane segments (helical) span residues 6 to 26 (AFIP…ISLC), 107 to 127 (ILHF…SFWG), and 189 to 209 (ILSG…KYWI).

The protein belongs to the CemA family.

Its subcellular location is the plastid. It is found in the chloroplast inner membrane. It catalyses the reaction K(+)(in) + H(+)(out) = K(+)(out) + H(+)(in). In terms of biological role, contributes to K(+)/H(+) antiport activity by supporting proton efflux to control proton extrusion and homeostasis in chloroplasts in a light-dependent manner to modulate photosynthesis. Prevents excessive induction of non-photochemical quenching (NPQ) under continuous-light conditions. Indirectly promotes efficient inorganic carbon uptake into chloroplasts. The sequence is that of Potassium/proton antiporter CemA from Lepidium virginicum (Virginia pepperweed).